Here is a 288-residue protein sequence, read N- to C-terminus: 2-hydroxy-6-oxononadienedioate/2-hydroxy-6-oxononatrienedioate hydrolase (288 aa).

His-267 acts as the Proton acceptor in catalysis.

The protein belongs to the AB hydrolase superfamily. MhpC family. Homodimer.

The enzyme catalyses (2Z,4E)-2-hydroxy-6-oxonona-2,4-dienedioate + H2O = (2Z)-2-hydroxypenta-2,4-dienoate + succinate + H(+). The catalysed reaction is (2Z,4E,7E)-2-hydroxy-6-oxonona-2,4,7-trienedioate + H2O = (2Z)-2-hydroxypenta-2,4-dienoate + fumarate + H(+). It functions in the pathway aromatic compound metabolism; 3-phenylpropanoate degradation. Its function is as follows. Catalyzes the cleavage of the C5-C6 bond of 2-hydroxy-6-oxononadienedioate and 2-hydroxy-6-oxononatrienedioate, a dienol ring fission product of the bacterial meta-cleavage pathway for degradation of phenylpropionic acid. This chain is 2-hydroxy-6-oxononadienedioate/2-hydroxy-6-oxononatrienedioate hydrolase, found in Escherichia coli O81 (strain ED1a).